The chain runs to 454 residues: tRNA modification GTPase MnmE (454 aa).

(6S)-5-formyl-5,6,7,8-tetrahydrofolate is bound by residues R23, E80, and K120. The TrmE-type G domain maps to 216-377; that stretch reads TIKIVIAGPP…LKNKILEITT (162 aa). N226 contributes to the K(+) binding site. Residues 226-231, 245-251, and 270-273 each bind GTP; these read NVGKSS, TNIPGTT, and DTAG. S230 is a binding site for Mg(2+). Residues T245, I247, and T250 each coordinate K(+). T251 lines the Mg(2+) pocket. K454 lines the (6S)-5-formyl-5,6,7,8-tetrahydrofolate pocket.

The protein belongs to the TRAFAC class TrmE-Era-EngA-EngB-Septin-like GTPase superfamily. TrmE GTPase family. Homodimer. Heterotetramer of two MnmE and two MnmG subunits. The cofactor is K(+).

The protein resides in the cytoplasm. Exhibits a very high intrinsic GTPase hydrolysis rate. Involved in the addition of a carboxymethylaminomethyl (cmnm) group at the wobble position (U34) of certain tRNAs, forming tRNA-cmnm(5)s(2)U34. This chain is tRNA modification GTPase MnmE, found in Buchnera aphidicola subsp. Cinara cedri (strain Cc).